We begin with the raw amino-acid sequence, 94 residues long: Large ribosomal subunit protein uL23 (94 aa).

This sequence belongs to the universal ribosomal protein uL23 family. As to quaternary structure, part of the 50S ribosomal subunit. Contacts protein L29, and trigger factor when it is bound to the ribosome.

In terms of biological role, one of the early assembly proteins it binds 23S rRNA. One of the proteins that surrounds the polypeptide exit tunnel on the outside of the ribosome. Forms the main docking site for trigger factor binding to the ribosome. In Listeria innocua serovar 6a (strain ATCC BAA-680 / CLIP 11262), this protein is Large ribosomal subunit protein uL23.